We begin with the raw amino-acid sequence, 204 residues long: Uracil-DNA glycosylase (204 aa).

Residue D47 is the Proton acceptor of the active site.

This sequence belongs to the uracil-DNA glycosylase (UDG) superfamily. UNG family.

Its subcellular location is the host nucleus. It carries out the reaction Hydrolyzes single-stranded DNA or mismatched double-stranded DNA and polynucleotides, releasing free uracil.. In terms of biological role, excises uracil residues from the DNA which can arise as a result of misincorporation of dUMP residues by DNA polymerase or deamination of cytosines. Therefore may reduce deleterious uracil incorporation into the viral genome, particularly in terminally differentiated cells which lack DNA repair enzymes. The protein is Uracil-DNA glycosylase (UL2) of Bos taurus (Bovine).